A 339-amino-acid chain; its full sequence is Very-long-chain 3-oxoacyl-CoA reductase (339 aa).

Residues 19-39 (VALFLLSIGGLFTACKLFSFC) traverse the membrane as a helical segment. NADP(+) contacts are provided by leucine 64, lysine 105, aspartate 119, aspartate 127, asparagine 146, tyrosine 213, lysine 217, valine 246, and serine 248. Tyrosine 213 acts as the Proton donor in catalysis. Residue lysine 217 is the Lowers pKa of active site Tyr of the active site.

It belongs to the short-chain dehydrogenases/reductases (SDR) family.

It is found in the endoplasmic reticulum membrane. It catalyses the reaction a very-long-chain (3R)-3-hydroxyacyl-CoA + NADP(+) = a very-long-chain 3-oxoacyl-CoA + NADPH + H(+). It participates in lipid metabolism; fatty acid biosynthesis. Component of the microsomal membrane bound fatty acid elongation system, which produces the 26-carbon very long-chain fatty acids (VLCFA) from palmitate. Catalyzes the reduction of the 3-ketoacyl-CoA intermediate that is formed in each cycle of fatty acid elongation. VLCFAs serve as precursors for ceramide and sphingolipids. The polypeptide is Very-long-chain 3-oxoacyl-CoA reductase (Ajellomyces capsulatus (strain NAm1 / WU24) (Darling's disease fungus)).